Consider the following 545-residue polypeptide: Carboxypeptidase N subunit 2 (545 aa).

The first 21 residues, 1-21, serve as a signal peptide directing secretion; the sequence is MLPGAWLLWTSLLLLARPAQP. The 28-residue stretch at 22-49 folds into the LRRNT domain; the sequence is CPMGCDCFVQEVFCSDEELATVPLDIPP. N-linked (GlcNAc...) asparagine glycosylation is found at N74, N111, and N119. LRR repeat units lie at residues 98–119, 122–143, 146–167, 170–191, 194–215, 218–239, 242–263, 266–287, 290–311, 314–335, 338–359, and 362–383; these read RLEDLEVTGSSFLNLSTNIFSN, SLGKLTLNFNMLEALPEGLFQH, ALESLHLQGNQLQALPRRLFQP, HLKTLNLAQNLLAQLPEELFHP, SLQTLKLSNNALSGLPQGVFGK, SLQELFLDSNNISELPPQVFSQ, CLERLWLQRNAITHLPLSIFAS, NLTFLSLQWNMLRVLPAGLFAH, CLVGLSLTHNQLETVAEGTFAH, NLRSLMLSYNAITHLPAGIFRD, ELVKLYLGSNNLTALHPALFQN, and KLELLSLSKNQLTTLPEGIFDT. N228 is a glycosylation site (N-linked (GlcNAc...) asparagine). Residue N266 is glycosylated (N-linked (GlcNAc...) asparagine). 2 N-linked (GlcNAc...) asparagine glycosylation sites follow: N348 and N359. The LRRCT domain maps to 395 to 447; that stretch reads NPWQCDCHLAYLFNWLQQYTDRLLNIQTYCAGPAYLKGQVVPALNEKQLVCPV. A glycan (N-linked (GlcNAc...) asparagine) is linked at N518.

Tetramer of two catalytic chains and two glycosylated inactive chains. Whether or not any Cys residues participate in intrachain bonds is unknown, but they do not form interchain disulfide bonds with the 50 kDa catalytic subunit.

It localises to the secreted. In terms of biological role, the 83 kDa subunit binds and stabilizes the catalytic subunit at 37 degrees Celsius and keeps it in circulation. Under some circumstances it may be an allosteric modifier of the catalytic subunit. The chain is Carboxypeptidase N subunit 2 (CPN2) from Homo sapiens (Human).